The sequence spans 152 residues: Coiled-coil domain-containing protein 182 (152 aa).

Residues A46 to I109 adopt a coiled-coil conformation.

The polypeptide is Coiled-coil domain-containing protein 182 (Ccdc182) (Mus musculus (Mouse)).